A 119-amino-acid polypeptide reads, in one-letter code: Dihydroneopterin aldolase (119 aa).

Substrate contacts are provided by residues E21, Y53, and 72–73 (IE). K99 (proton donor/acceptor) is an active-site residue.

This sequence belongs to the DHNA family.

It catalyses the reaction 7,8-dihydroneopterin = 6-hydroxymethyl-7,8-dihydropterin + glycolaldehyde. The protein operates within cofactor biosynthesis; tetrahydrofolate biosynthesis; 2-amino-4-hydroxy-6-hydroxymethyl-7,8-dihydropteridine diphosphate from 7,8-dihydroneopterin triphosphate: step 3/4. In terms of biological role, catalyzes the conversion of 7,8-dihydroneopterin to 6-hydroxymethyl-7,8-dihydropterin. The protein is Dihydroneopterin aldolase (folB) of Streptococcus pyogenes serotype M1.